Consider the following 368-residue polypeptide: MTTLIPVPLGEHSYRIAIGANTRRQLPALLAAYTPLTPKAPALIVSNPQIWRHYGTDVQGALTQAGWQVTPCILPAGERYKTLRTVEKIYDAALSQRLERGSTLFALGGGVIGDMTGFAAATWLRGIAVVQIPTSLLAMVDAAIGGKTGVNHPQGKNLIGAFHQPRLVVIDPDVLATLPPREFRAGMAEVIKYGVIWDAELFHLLSQLPRLDCMGALPSEQFIQVLRRSCQAKVDVVSKDEREAGLRAILNYGHTIGHALESIGNYRLLNHGEAVAIGMIAAGELAVALGYWSAEAAAAQRALILKAKLPTTIPPHFDVEGLLALLQHDKKVQAQNVRFILPTAIGHGQICDQVPAELIRETLHRLQA.

NAD(+)-binding positions include 110–114 (GVIGD), 134–135 (TS), lysine 147, and lysine 156. Glutamate 189, histidine 254, and histidine 271 together coordinate Zn(2+).

The protein belongs to the sugar phosphate cyclases superfamily. Dehydroquinate synthase family. NAD(+) serves as cofactor. The cofactor is Co(2+). Zn(2+) is required as a cofactor.

The protein resides in the cytoplasm. The enzyme catalyses 7-phospho-2-dehydro-3-deoxy-D-arabino-heptonate = 3-dehydroquinate + phosphate. Its pathway is metabolic intermediate biosynthesis; chorismate biosynthesis; chorismate from D-erythrose 4-phosphate and phosphoenolpyruvate: step 2/7. In terms of biological role, catalyzes the conversion of 3-deoxy-D-arabino-heptulosonate 7-phosphate (DAHP) to dehydroquinate (DHQ). This chain is 3-dehydroquinate synthase, found in Thermosynechococcus vestitus (strain NIES-2133 / IAM M-273 / BP-1).